A 588-amino-acid chain; its full sequence is 2-succinyl-5-enolpyruvyl-6-hydroxy-3-cyclohexene-1-carboxylate synthase (588 aa).

This sequence belongs to the TPP enzyme family. MenD subfamily. In terms of assembly, homodimer. Requires Mg(2+) as cofactor. The cofactor is Mn(2+). Thiamine diphosphate is required as a cofactor.

It carries out the reaction isochorismate + 2-oxoglutarate + H(+) = 5-enolpyruvoyl-6-hydroxy-2-succinyl-cyclohex-3-ene-1-carboxylate + CO2. The protein operates within quinol/quinone metabolism; 1,4-dihydroxy-2-naphthoate biosynthesis; 1,4-dihydroxy-2-naphthoate from chorismate: step 2/7. Its pathway is cofactor biosynthesis; phylloquinone biosynthesis. Functionally, catalyzes the thiamine diphosphate-dependent decarboxylation of 2-oxoglutarate and the subsequent addition of the resulting succinic semialdehyde-thiamine pyrophosphate anion to isochorismate to yield 2-succinyl-5-enolpyruvyl-6-hydroxy-3-cyclohexene-1-carboxylate (SEPHCHC). The protein is 2-succinyl-5-enolpyruvyl-6-hydroxy-3-cyclohexene-1-carboxylate synthase of Prochlorococcus marinus (strain MIT 9515).